A 236-amino-acid polypeptide reads, in one-letter code: Baculoviral IAP repeat-containing protein 8 (236 aa).

The stretch at 7–70 is one BIR repeat; the sequence is WLITFGTWMY…KWYPGCKYLL (64 aa). Residues C39, C42, H59, and C66 each coordinate Zn(2+). The RING-type zinc finger occupies 189–224; the sequence is CKICMDRHIAVVFIPCGHLVTCKQCAEAVDRCPMCN.

Belongs to the IAP family. Binds to caspase-9.

It localises to the cytoplasm. In terms of biological role, protects against apoptosis mediated by BAX. In Gorilla gorilla gorilla (Western lowland gorilla), this protein is Baculoviral IAP repeat-containing protein 8 (BIRC8).